Reading from the N-terminus, the 238-residue chain is Uridylate kinase (238 aa).

12–15 (KLSG) lines the ATP pocket. Residue glycine 54 coordinates UMP. The ATP site is built by glycine 55 and arginine 59. UMP contacts are provided by residues aspartate 74 and 135 to 142 (VGAPYFTT). 3 residues coordinate ATP: threonine 162, tyrosine 168, and aspartate 171.

The protein belongs to the UMP kinase family. In terms of assembly, homohexamer.

It localises to the cytoplasm. It catalyses the reaction UMP + ATP = UDP + ADP. Its pathway is pyrimidine metabolism; CTP biosynthesis via de novo pathway; UDP from UMP (UMPK route): step 1/1. With respect to regulation, inhibited by UTP. In terms of biological role, catalyzes the reversible phosphorylation of UMP to UDP. This chain is Uridylate kinase, found in Erythrobacter litoralis (strain HTCC2594).